The chain runs to 102 residues: Small ribosomal subunit protein uS10 (102 aa).

Belongs to the universal ribosomal protein uS10 family. In terms of assembly, part of the 30S ribosomal subunit.

Involved in the binding of tRNA to the ribosomes. The protein is Small ribosomal subunit protein uS10 of Acidothermus cellulolyticus (strain ATCC 43068 / DSM 8971 / 11B).